We begin with the raw amino-acid sequence, 157 residues long: MTKKPDPASRIADNKKAAHDYFLEERYEAGMVLHGWEVKALRAGKAQLTDGYVLIRDGELFLLGCQLQALKTASTHVSPEAARTKKLLLKKDDIRRLIGKVEQKGYTLVPLNLHWKNGVVKCEIALARGKAQHDKRNSIKEREGKREVERALKSRSR.

The segment at 133–157 (HDKRNSIKEREGKREVERALKSRSR) is disordered.

This sequence belongs to the SmpB family.

The protein localises to the cytoplasm. Required for rescue of stalled ribosomes mediated by trans-translation. Binds to transfer-messenger RNA (tmRNA), required for stable association of tmRNA with ribosomes. tmRNA and SmpB together mimic tRNA shape, replacing the anticodon stem-loop with SmpB. tmRNA is encoded by the ssrA gene; the 2 termini fold to resemble tRNA(Ala) and it encodes a 'tag peptide', a short internal open reading frame. During trans-translation Ala-aminoacylated tmRNA acts like a tRNA, entering the A-site of stalled ribosomes, displacing the stalled mRNA. The ribosome then switches to translate the ORF on the tmRNA; the nascent peptide is terminated with the 'tag peptide' encoded by the tmRNA and targeted for degradation. The ribosome is freed to recommence translation, which seems to be the essential function of trans-translation. This chain is SsrA-binding protein, found in Verminephrobacter eiseniae (strain EF01-2).